Consider the following 106-residue polypeptide: Small ribosomal subunit protein bS20 (106 aa).

Basic residues predominate over residues Met1–Ala32. The disordered stretch occupies residues Met1–Ile33.

This sequence belongs to the bacterial ribosomal protein bS20 family.

Functionally, binds directly to 16S ribosomal RNA. This chain is Small ribosomal subunit protein bS20 (rpsT), found in Thermus thermophilus (strain ATCC BAA-163 / DSM 7039 / HB27).